Consider the following 453-residue polypeptide: Aspartic proteinase PCS1 (453 aa).

Residues 1–18 form the signal peptide; the sequence is MFSRFHALFLLLVLSVRT. A propeptide spans 19 to 57 (activation peptide); it reads YKCVSSSSSSSSSFSFSSFSSSSSSQTLVLPLKTRITPT. Asparagine 70 and asparagine 85 each carry an N-linked (GlcNAc...) asparagine glycan. The Peptidase A1 domain occupies 73–438; that stretch reads LTVTLTVGTP…DLQRSRIGLA (366 aa). The active site involves aspartate 91. N-linked (GlcNAc...) asparagine glycosylation is found at asparagine 102, asparagine 175, asparagine 178, and asparagine 243. Aspartate 304 is a catalytic residue. N-linked (GlcNAc...) asparagine glycosylation is found at asparagine 326 and asparagine 395.

It belongs to the peptidase A1 family. As to expression, expressed specifically in developing gametophytes and developing seeds.

It is found in the endoplasmic reticulum. Embryo-specific aspartic protease that limits programmed cell death during reproductive development. Possesses peptidase activity toward casein in vitro. The protein is Aspartic proteinase PCS1 (PCS1) of Arabidopsis thaliana (Mouse-ear cress).